The sequence spans 233 residues: Lipoprotein-releasing system ATP-binding protein LolD (233 aa).

The ABC transporter domain occupies 6–233 (LQCDNLCKRY…TAELSLMGAE (228 aa)). 42–49 (GSSGSGKS) is an ATP binding site.

Belongs to the ABC transporter superfamily. Lipoprotein translocase (TC 3.A.1.125) family. In terms of assembly, the complex is composed of two ATP-binding proteins (LolD) and two transmembrane proteins (LolC and LolE).

Its subcellular location is the cell inner membrane. In terms of biological role, part of the ABC transporter complex LolCDE involved in the translocation of mature outer membrane-directed lipoproteins, from the inner membrane to the periplasmic chaperone, LolA. Responsible for the formation of the LolA-lipoprotein complex in an ATP-dependent manner. In Salmonella paratyphi A (strain ATCC 9150 / SARB42), this protein is Lipoprotein-releasing system ATP-binding protein LolD.